We begin with the raw amino-acid sequence, 1044 residues long: DEMETER-like protein 3 (1044 aa).

Residues 1–15 (MLTDGSQHTYQNGET) are compositionally biased toward polar residues. Residues 1-107 (MLTDGSQHTY…KPRNPATTRL (107 aa)) form a disordered region. Over residues 16 to 30 (KNSKEHERKCDESAH) the composition is skewed to basic and acidic residues. The segment covering 38-53 (THKKKEKKNSKEKHGI) has biased composition (basic residues). Over residues 54-66 (KHSESEHLQDDIS) the composition is skewed to basic and acidic residues. The span at 71 to 89 (GKGRRRNSKGTPKKLRFNR) shows a compositional bias: basic residues. Residues 348-445 (KVNLDPETIK…AFMSVAAKFP (98 aa)) form a DEMETER region. [4Fe-4S] cluster-binding residues include Cys678, Cys685, Cys688, and Cys694. Positions 1024 to 1044 (VRRLHTPPDERGPKFMSDDDI) are disordered.

The protein belongs to the DNA glycosylase family. DEMETER subfamily. [4Fe-4S] cluster is required as a cofactor.

It is found in the nucleus. In terms of biological role, potential transcriptional activator that may act by nicking the target promoter. Catalyzes the release of 5-methylcytosine (5-meC) from DNA by a glycosylase/lyase mechanism. The sequence is that of DEMETER-like protein 3 (DML3) from Arabidopsis thaliana (Mouse-ear cress).